Here is a 319-residue protein sequence, read N- to C-terminus: Acetyl-coenzyme A carboxylase carboxyl transferase subunit alpha (319 aa).

The 262-residue stretch at 32-293 (NVDTEVRALE…KAVLLNELEA (262 aa)) folds into the CoA carboxyltransferase C-terminal domain.

It belongs to the AccA family. As to quaternary structure, acetyl-CoA carboxylase is a heterohexamer composed of biotin carboxyl carrier protein (AccB), biotin carboxylase (AccC) and two subunits each of ACCase subunit alpha (AccA) and ACCase subunit beta (AccD).

It is found in the cytoplasm. The enzyme catalyses N(6)-carboxybiotinyl-L-lysyl-[protein] + acetyl-CoA = N(6)-biotinyl-L-lysyl-[protein] + malonyl-CoA. Its pathway is lipid metabolism; malonyl-CoA biosynthesis; malonyl-CoA from acetyl-CoA: step 1/1. Component of the acetyl coenzyme A carboxylase (ACC) complex. First, biotin carboxylase catalyzes the carboxylation of biotin on its carrier protein (BCCP) and then the CO(2) group is transferred by the carboxyltransferase to acetyl-CoA to form malonyl-CoA. This chain is Acetyl-coenzyme A carboxylase carboxyl transferase subunit alpha, found in Xylella fastidiosa (strain 9a5c).